Consider the following 192-residue polypeptide: Thioredoxin-like 3-2, chloroplastic (192 aa).

A chloroplast-targeting transit peptide spans 1 to 55 (MSEIVNLSSSLRSLNPKISPLVPPYRQTSSSFSRPRNFKYHSFTDKICLAAERIR). In terms of domain architecture, Thioredoxin spans 66–191 (LQELDDSPVS…VREMIENDSI (126 aa)). Catalysis depends on nucleophile residues C110 and C113. The cysteines at positions 110 and 113 are disulfide-linked.

Belongs to the thioredoxin family.

The protein resides in the plastid. It is found in the chloroplast stroma. Probable thiol-disulfide oxidoreductase that may participate in various redox reactions. The chain is Thioredoxin-like 3-2, chloroplastic (WCRKC2) from Arabidopsis thaliana (Mouse-ear cress).